Here is a 115-residue protein sequence, read N- to C-terminus: UPF0122 protein NT01CX_2214 (115 aa).

The protein belongs to the UPF0122 family.

Functionally, might take part in the signal recognition particle (SRP) pathway. This is inferred from the conservation of its genetic proximity to ftsY/ffh. May be a regulatory protein. The sequence is that of UPF0122 protein NT01CX_2214 from Clostridium novyi (strain NT).